A 195-amino-acid chain; its full sequence is UDP-N-acetylbacillosamine N-acetyltransferase (195 aa).

Residues 13–15 (SGH), 35–36 (DD), and G56 each bind substrate. Residue H125 is the Proton acceptor of the active site. Acetyl-CoA is bound by residues H134, I155, and G173.

It belongs to the transferase hexapeptide repeat family. In terms of assembly, homotrimer.

It catalyses the reaction UDP-N-acetylbacillosamine + acetyl-CoA = UDP-N,N'-diacetylbacillosamine + CoA + H(+). Its pathway is protein modification; protein glycosylation. In terms of biological role, acetyltransferase that modifies the UDP-4-amino-sugar to form UDP-N,N'-diacetylbacillosamine in the N-linked protein glycosylation pathway. The protein is UDP-N-acetylbacillosamine N-acetyltransferase (pglD) of Campylobacter jejuni subsp. jejuni serotype O:2 (strain ATCC 700819 / NCTC 11168).